Reading from the N-terminus, the 164-residue chain is Pathogenesis-related protein PRB1-2 (164 aa).

The N-terminal stretch at 1-24 (MQTPKLAILLALAMAAAMVNLSQA) is a signal peptide. Q25 is subject to Pyrrolidone carboxylic acid. Positions 34-152 (PHNAARSAVG…NRGVFITCNY (119 aa)) constitute an SCP domain. 3 disulfide bridges follow: C68/C140, C113/C119, and C135/C150.

The protein belongs to the CRISP family.

Its function is as follows. Probably involved in the defense reaction of plants against pathogens. The polypeptide is Pathogenesis-related protein PRB1-2 (Hordeum vulgare (Barley)).